Consider the following 197-residue polypeptide: uncharacterized protein (197 aa).

4 helical membrane-spanning segments follow: residues 9 to 29, 67 to 87, 104 to 124, and 160 to 180; these read IYILQTLGSLYLLIVLLRFIL, LASLVLAILIQLVLMILILML, IIAVTSLFLKVFFFALIISVI, and GLDLSPIFAFLALKLIDMLVI.

Belongs to the YggT family.

It localises to the cell membrane. This is an uncharacterized protein from Pseudomonas aeruginosa (strain ATCC 15692 / DSM 22644 / CIP 104116 / JCM 14847 / LMG 12228 / 1C / PRS 101 / PAO1).